Reading from the N-terminus, the 139-residue chain is Nucleoside diphosphate kinase (139 aa).

ATP is bound by residues lysine 10, phenylalanine 58, arginine 86, threonine 92, arginine 104, and asparagine 114. The Pros-phosphohistidine intermediate role is filled by histidine 117.

Belongs to the NDK family. As to quaternary structure, homotetramer. Mg(2+) serves as cofactor.

The protein resides in the cytoplasm. The catalysed reaction is a 2'-deoxyribonucleoside 5'-diphosphate + ATP = a 2'-deoxyribonucleoside 5'-triphosphate + ADP. It catalyses the reaction a ribonucleoside 5'-diphosphate + ATP = a ribonucleoside 5'-triphosphate + ADP. Functionally, major role in the synthesis of nucleoside triphosphates other than ATP. The ATP gamma phosphate is transferred to the NDP beta phosphate via a ping-pong mechanism, using a phosphorylated active-site intermediate. This is Nucleoside diphosphate kinase from Mycolicibacterium smegmatis (strain ATCC 700084 / mc(2)155) (Mycobacterium smegmatis).